The sequence spans 147 residues: Hemoglobin subunit gamma (147 aa).

Positions 3–147 (HFTAEEKAAI…VANALAYKYH (145 aa)) constitute a Globin domain. Positions 64 and 93 each coordinate heme b.

This sequence belongs to the globin family. Heterotetramer of two alpha chains and two gamma chains in fetal hemoglobin (Hb F). In terms of tissue distribution, red blood cells.

Functionally, gamma chains make up the fetal hemoglobin F, in combination with alpha chains. In Elephas maximus (Indian elephant), this protein is Hemoglobin subunit gamma (HBG).